The sequence spans 122 residues: MARIAGVNIPTNKRVLIALQYIHGIGQKSARDIVTKVGIDDARRVNQLTDAEVLAIRETIDKDFTVEGDLRRENSMNIKRLMDLACYRGLRHRKGLPVRGQRTHTNARTRKGPAKPIAGKKK.

The tract at residues 95–122 is disordered; the sequence is GLPVRGQRTHTNARTRKGPAKPIAGKKK.

The protein belongs to the universal ribosomal protein uS13 family. As to quaternary structure, part of the 30S ribosomal subunit. Forms a loose heterodimer with protein S19. Forms two bridges to the 50S subunit in the 70S ribosome.

Located at the top of the head of the 30S subunit, it contacts several helices of the 16S rRNA. In the 70S ribosome it contacts the 23S rRNA (bridge B1a) and protein L5 of the 50S subunit (bridge B1b), connecting the 2 subunits; these bridges are implicated in subunit movement. Contacts the tRNAs in the A and P-sites. The chain is Small ribosomal subunit protein uS13 from Caulobacter sp. (strain K31).